The chain runs to 600 residues: Tripeptidyl-peptidase 1 (600 aa).

Positions 1–22 (MNIKFNLIIIILFILFISNVNC) are cleaved as a signal peptide. Positions 23 to 220 (KKIKNKKHLT…GGGGKVNGIG (198 aa)) are cleaved as a propeptide — removed in mature form. N-linked (GlcNAc...) asparagine glycosylation is found at Asn91, Asn259, and Asn266. Residues 248–600 (YLSPDLIRKE…FDELVKYCLE (353 aa)) form the Peptidase S53 domain. Catalysis depends on charge relay system residues Glu318 and Asp322. Cysteines 411 and 570 form a disulfide. 2 N-linked (GlcNAc...) asparagine glycosylation sites follow: Asn475 and Asn483. Ser514 serves as the catalytic Charge relay system. Ca(2+) contacts are provided by Asp559, Ile560, Gly579, and Asp581.

In terms of assembly, monomer. Requires Ca(2+) as cofactor. Activated by autocatalytic proteolytical processing upon acidification. N-glycosylation is required for processing and activity.

It localises to the secreted. The catalysed reaction is Release of an N-terminal tripeptide from a polypeptide, but also has endopeptidase activity.. Serine protease with tripeptidyl-peptidase I activity. The chain is Tripeptidyl-peptidase 1 (tpp1) from Dictyostelium discoideum (Social amoeba).